The sequence spans 169 residues: Putative phosphoesterase BLi01284/BL02661 (169 aa).

H34 functions as the Proton donor in the catalytic mechanism. 2 short sequence motifs (HXTX) span residues 34 to 37 and 115 to 118; these read HLTL and HVTV. H115 acts as the Proton acceptor in catalysis.

It belongs to the 2H phosphoesterase superfamily. YjcG family.

The protein is Putative phosphoesterase BLi01284/BL02661 of Bacillus licheniformis (strain ATCC 14580 / DSM 13 / JCM 2505 / CCUG 7422 / NBRC 12200 / NCIMB 9375 / NCTC 10341 / NRRL NRS-1264 / Gibson 46).